Consider the following 147-residue polypeptide: Large ribosomal subunit protein bL9 (147 aa).

Belongs to the bacterial ribosomal protein bL9 family.

In terms of biological role, binds to the 23S rRNA. The polypeptide is Large ribosomal subunit protein bL9 (Gemmatimonas aurantiaca (strain DSM 14586 / JCM 11422 / NBRC 100505 / T-27)).